The following is a 550-amino-acid chain: Translocated intimin receptor Tir (550 aa).

Residues 1–13 (MPIGNLGNNVNGN) are compositionally biased toward low complexity. 2 disordered regions span residues 1 to 38 (MPIG…GHLI) and 185 to 228 (LDPD…NSSV). Over 1–233 (MPIGNLGNNV…TNSSVRSDPK (233 aa)) the chain is Cytoplasmic. Residues 185–200 (LDPDNHGGRQPKDVDT) show a composition bias toward basic and acidic residues. Positions 218-228 (ETHTSTTNSSV) are enriched in polar residues. Residues 234 to 254 (FWVSVGAIAAGLAGLAATGIA) traverse the membrane as a helical segment. The Extracellular portion of the chain corresponds to 255-362 (QALALTPEPD…RRQEELQLSS (108 aa)). Disordered stretches follow at residues 260–285 (TPEP…TKDQ) and 332–354 (ARQQ…HARR). Positions 336–345 (AVESNAQAQQ) are enriched in polar residues. A helical membrane pass occupies residues 363–383 (GIGYGLSSALIVAGGIGAGVT). The Cytoplasmic portion of the chain corresponds to 384–550 (TALHRRNQPA…APTPGPVRFV (167 aa)). Residues 389-449 (RNQPAEQTTT…STHWSDSSSE (61 aa)) are disordered. A compositionally biased stretch (low complexity) spans 395 to 409 (QTTTTTTHTVVQQQT). A compositionally biased stretch (basic and acidic residues) spans 422–434 (TRAEDASLNRRDS). Over residues 435–449 (QGSVASTHWSDSSSE) the composition is skewed to polar residues. The short motif at 452–454 (NPY) is the Essential for NCK-independent actin pedestal formation element. A phosphotyrosine mark is found at Tyr-454 and Tyr-474.

Belongs to the Tir receptor family. Interacts with intimin. Interacts with host proteins NCK1, NCK2, alpha-actinin and BAIAP2. Phosphorylated on Tyr-474 by host kinases. Tyr-454 can also be phosphorylated, although at lower efficiency. Phosphorylation is stimulated by clustering of Tir by intimin.

Its subcellular location is the secreted. The protein localises to the host cell membrane. Functionally, multifunctional protein that is required for efficient pedestal formation in host epithelial cells during infection. The extracellular region acts as a receptor for bacterial intimin, allowing the bacterium to attach tightly to the host-cell surface. Simultaneously, the intracellular region initiates a signaling cascade in the host cell, which leads to actin polymerization and formation of actin pedestals at the sites of bacterial adhesion. In strain E2348/69, acts mainly via the host adaptor proteins NCK1 and NCK2. Once clustered and phosphorylated at Tyr-474, Tir binds to NCK proteins, which in turn bind and activate host WASL/N-WASP, leading to actin polymerization. Can also trigger an inefficient, NCK-independent pedestal formation. This pathway involves phosphorylation of Tyr-454 and probably a putative host adaptor. Also acts via direct binding to the host cytoskeletal protein alpha-actinin in a NCK- and phosphotyrosine-independent manner. This interaction may stabilize the pedestal, but is not essential for its formation. The chain is Translocated intimin receptor Tir (tir) from Escherichia coli O127:H6 (strain E2348/69 / EPEC).